The following is a 221-amino-acid chain: N-(5'-phosphoribosyl)anthranilate isomerase (221 aa).

The protein belongs to the TrpF family.

It catalyses the reaction N-(5-phospho-beta-D-ribosyl)anthranilate = 1-(2-carboxyphenylamino)-1-deoxy-D-ribulose 5-phosphate. It functions in the pathway amino-acid biosynthesis; L-tryptophan biosynthesis; L-tryptophan from chorismate: step 3/5. The sequence is that of N-(5'-phosphoribosyl)anthranilate isomerase from Chlorobaculum parvum (strain DSM 263 / NCIMB 8327) (Chlorobium vibrioforme subsp. thiosulfatophilum).